A 241-amino-acid polypeptide reads, in one-letter code: Ribonuclease PH (241 aa).

Phosphate-binding positions include Arg-90 and 128–130 (GTR).

It belongs to the RNase PH family. Homohexameric ring arranged as a trimer of dimers.

It carries out the reaction tRNA(n+1) + phosphate = tRNA(n) + a ribonucleoside 5'-diphosphate. Functionally, phosphorolytic 3'-5' exoribonuclease that plays an important role in tRNA 3'-end maturation. Removes nucleotide residues following the 3'-CCA terminus of tRNAs; can also add nucleotides to the ends of RNA molecules by using nucleoside diphosphates as substrates, but this may not be physiologically important. Probably plays a role in initiation of 16S rRNA degradation (leading to ribosome degradation) during starvation. The polypeptide is Ribonuclease PH (Corynebacterium diphtheriae (strain ATCC 700971 / NCTC 13129 / Biotype gravis)).